The sequence spans 55 residues: uncharacterized protein (55 aa).

A helical transmembrane segment spans residues 24 to 46; sequence LFIIFFTYSYYYCGFLQSFNYII.

Its subcellular location is the membrane. This is an uncharacterized protein from Dictyostelium discoideum (Social amoeba).